The primary structure comprises 339 residues: Phenylalanine--tRNA ligase alpha subunit (339 aa).

Position 254 (Glu-254) interacts with Mg(2+).

It belongs to the class-II aminoacyl-tRNA synthetase family. Phe-tRNA synthetase alpha subunit type 1 subfamily. Tetramer of two alpha and two beta subunits. Mg(2+) serves as cofactor.

Its subcellular location is the cytoplasm. The enzyme catalyses tRNA(Phe) + L-phenylalanine + ATP = L-phenylalanyl-tRNA(Phe) + AMP + diphosphate + H(+). In Clostridium beijerinckii (strain ATCC 51743 / NCIMB 8052) (Clostridium acetobutylicum), this protein is Phenylalanine--tRNA ligase alpha subunit.